We begin with the raw amino-acid sequence, 381 residues long: L-lactate dehydrogenase A-like 6B (381 aa).

Residues 101 to 106 and R148 contribute to the NAD(+) site; that span reads DLDEDK. 3 residues coordinate substrate: R155, N187, and R218. An NAD(+)-binding site is contributed by N187. The active-site Proton acceptor is H242. Substrate is bound at residue T297.

This sequence belongs to the LDH/MDH superfamily. LDH family. As to expression, testis specific.

It catalyses the reaction (S)-lactate + NAD(+) = pyruvate + NADH + H(+). It participates in fermentation; pyruvate fermentation to lactate; (S)-lactate from pyruvate: step 1/1. The polypeptide is L-lactate dehydrogenase A-like 6B (LDHAL6B) (Homo sapiens (Human)).